We begin with the raw amino-acid sequence, 708 residues long: Leukotoxin translocation ATP-binding protein LktB (708 aa).

The Peptidase C39 domain maps to 1-126; sequence MEANHQRNDL…ACYQGQLILV (126 aa). Residues 155–437 enclose the ABC transmembrane type-1 domain; sequence FLETLIVSIF…LAQLWQDFQQ (283 aa). Helical transmembrane passes span 159–179, 192–212, 270–290, 296–316, and 389–409; these read LIVS…FQVV, LNII…LSGL, ALTS…MWYY, LVIL…SPIL, and VMVI…LSIG. In terms of domain architecture, ABC transporter spans 469–704; the sequence is ISFKNIRFRY…SNGLYSYLHQ (236 aa). 503–510 serves as a coordination point for ATP; sequence GRSGSGKS.

It belongs to the ABC transporter superfamily. Protein-1 exporter (TC 3.A.1.109) family. Homodimer.

It localises to the cell inner membrane. It catalyses the reaction ATP + H2O + proteinSide 1 = ADP + phosphate + proteinSide 2.. Part of the ABC transporter complex LktBD involved in leukotoxin export. Transmembrane domains (TMD) form a pore in the inner membrane and the ATP-binding domain (NBD) is responsible for energy generation. In Mannheimia haemolytica (Pasteurella haemolytica), this protein is Leukotoxin translocation ATP-binding protein LktB (lktB).